A 3767-amino-acid polypeptide reads, in one-letter code: Transmembrane cell adhesion receptor mua-3 (3767 aa).

The N-terminal stretch at 1-24 (MQAGISIFFLFLHIPIFFVNCSNS) is a signal peptide. Topologically, residues 25-3417 (TSCVAREEFQ…CQVAPSNASL (3393 aa)) are extracellular. Residues 26-63 (SCVAREEFQCKMDDSCISMKKWQDGVDDCYDGSDEVCL) form the LDL-receptor class A 1 domain. Intrachain disulfides connect C27–C41, C35–C54, C62–C76, C69–C89, C97–C110, C104–C123, C131–C144, C138–C157, C165–C179, and C172–C192. LDL-receptor class A domains lie at 96–132 (GCPA…EPCA), 133–166 (QNQF…EECT), and 167–209 (TSQF…ANCT). N201 and N207 each carry an N-linked (GlcNAc...) asparagine glycan. EGF-like domains follow at residues 225-268 (KLKF…DKCI), 375-416 (NRDD…GTCR), 418-466 (LIDE…RKCR), 468-517 (LINE…RNCT), 519-566 (AINE…RKCV), 614-663 (RANP…RKCV), 665-713 (AVDE…RSCK), 714-760 (KADM…RVCR), 762-810 (VVNE…KNCV), 816-860 (DPPE…GRCV), 861-908 (VINE…RICR), 910-961 (RVNE…RRCI), 963-1012 (AVNE…RICT), 1029-1070 (TDDG…GSCR), 1071-1118 (VYSA…RICK), 1120-1168 (LINE…RQCT), and 1170-1219 (SNNE…RVCT). 51 cysteine pairs are disulfide-bonded: C229/C243, C235/C252, C254/C267, C381/C392, C386/C402, C404/C415, C422/C435, C429/C444, C446/C465, C472/C486, C480/C495, C497/C516, C523/C536, C530/C545, C547/C565, C618/C632, C626/C642, C644/C662, C669/C682, C676/C691, C693/C712, C718/C729, C723/C738, C740/C759, C766/C779, C773/C788, C790/C809, C820/C836, C828/C845, C847/C859, C865/C879, C873/C888, C890/C907, C914/C930, C924/C939, C941/C960, C967/C981, C975/C990, C992/C1011, C1033/C1046, C1040/C1055, C1057/C1069, C1075/C1087, C1081/C1096, C1098/C1117, C1124/C1137, C1131/C1146, C1148/C1167, C1174/C1188, C1182/C1197, and C1199/C1218. N383 carries N-linked (GlcNAc...) asparagine glycosylation. An N-linked (GlcNAc...) asparagine glycan is attached at N515. The VWFA domain occupies 1230–1406 (DLVFLIDGSG…DLDTRLRSMI (177 aa)). The N-linked (GlcNAc...) asparagine glycan is linked to N1350. 29 consecutive EGF-like domains span residues 1421 to 1466 (SEDV…RVCG), 1466 to 1510 (GGDL…GFCV), 1521 to 1562 (HDAN…GQCA), 1563 to 1608 (YPGS…DICL), 1608 to 1656 (LKNE…RVCV), 1658 to 1706 (LQNE…MVCK), 1708 to 1755 (LVNE…RRCE), 1759 to 1807 (TNDK…RLCI), 1809 to 1860 (VIPE…RLCK), 1862 to 1911 (LQNE…RKCK), 1913 to 1961 (LINE…RRCL), 1963 to 2011 (RINE…RICR), 2014 to 2062 (LVDE…RLCQ), 2068 to 2112 (PPPE…GSCS), 2113 to 2160 (IINE…RMCK), 2162 to 2208 (MVNE…RICK), 2210 to 2258 (LTNE…RACR), 2260 to 2308 (LVNE…RVCL), 2310 to 2358 (FINE…RVCV), 2360 to 2408 (LVDE…RVCS), 2409 to 2455 (APEV…RVCV), 2456 to 2504 (RNNA…RVCE), 2513 to 2563 (PRHP…RLCV), 2565 to 2616 (TEPV…RICK), 2618 to 2666 (LINE…RICS), 2668 to 2714 (SVNE…HRCS), 2716 to 2763 (MINE…RICR), 2763 to 2811 (RLNE…RICI), and 2833 to 2872 (REFP…GKCQ). Disulfide bonds link C1425–C1441, C1433–C1450, C1452–C1465, C1470–C1484, C1478–C1494, C1496–C1509, C1525–C1538, C1532–C1547, C1549–C1561, C1567–C1583, C1575–C1592, C1594–C1607, C1612–C1625, C1619–C1634, C1636–C1655, C1662–C1675, C1669–C1684, C1686–C1705, C1712–C1726, C1720–C1735, C1737–C1754, C1763–C1776, C1770–C1786, C1788–C1806, C1813–C1829, C1821–C1838, C1840–C1859, C1866–C1880, C1873–C1889, C1891–C1910, C1917–C1930, C1924–C1939, C1941–C1960, C1967–C1980, C1974–C1989, C1991–C2010, C2018–C2031, C2025–C2040, C2042–C2061, C2072–C2088, C2080–C2097, C2099–C2111, C2117–C2131, C2125–C2140, C2142–C2159, C2166–C2180, C2174–C2189, C2191–C2207, C2214–C2228, C2222–C2237, C2239–C2257, C2264–C2278, C2272–C2287, C2289–C2307, C2314–C2327, C2321–C2336, C2338–C2357, C2364–C2377, C2371–C2386, C2388–C2407, C2413–C2425, C2419–C2435, C2437–C2454, C2460–C2474, C2468–C2483, and C2485–C2503. The interval 2492–2521 (RSPDSSQRGRVCEPPPPPSPPPRHPCQDPE) is disordered. The span at 2504–2515 (EPPPPPSPPPRH) shows a compositional bias: pro residues. Intrachain disulfides connect C2517/C2531, C2525/C2541, C2543/C2562, C2569/C2583, C2577/C2594, C2596/C2615, C2622/C2636, C2630/C2645, C2647/C2665, C2672/C2686, C2680/C2695, C2697/C2713, C2720/C2734, C2728/C2743, C2745/C2762, C2767/C2781, C2775/C2790, C2792/C2810, C2837/C2850, C2842/C2856, and C2858/C2871. An SEA 1 domain is found at 2873–2999 (EVQETPFELR…GSLRVASDTD (127 aa)). N2944 carries N-linked (GlcNAc...) asparagine glycosylation. In terms of domain architecture, EGF-like 47 spans 3009 to 3048 (EWGNCGGMSCKEHLKEVCIAGHICGCPDGMKRRDANSECR). 3 disulfides stabilise this stretch: C3013–C3026, C3018–C3032, and C3034–C3047. Residues 3049–3174 (VVESWNVPLW…SELYLNPTQP (126 aa)) form the SEA 2 domain. 2 N-linked (GlcNAc...) asparagine glycosylation sites follow: N3120 and N3130. 3 consecutive EGF-like domains span residues 3176 to 3220 (PFNP…KKCL), 3224 to 3272 (GFNE…SLCV), and 3272 to 3324 (VLDY…TLCM). 15 disulfide bridges follow: C3180–C3191, C3185–C3201, C3203–C3219, C3228–C3242, C3236–C3251, C3253–C3271, C3276–C3288, C3282–C3297, C3299–C3323, C3332–C3345, C3339–C3354, C3356–C3372, C3377–C3386, C3380–C3397, and C3399–C3408. N-linked (GlcNAc...) asparagine glycosylation occurs at N3285. The 46-residue stretch at 3328–3373 (DVDECALGLNNCSGVAHCIDRAVGYTCKCPDGYIDGNPDEPGRVCG) folds into the EGF-like 51; calcium-binding domain. N3337 is a glycosylation site (N-linked (GlcNAc...) asparagine; atypical). N3338 carries N-linked (GlcNAc...) asparagine glycosylation. The EGF-like 52 domain occupies 3373 to 3409 (GALLCDLCNAHGDCVHNTATNNITCVCTDGWTGPQCQ). An N-linked (GlcNAc...) asparagine glycan is attached at N3394. The N-linked (GlcNAc...) asparagine glycan is linked to N3414. A helical membrane pass occupies residues 3418–3438 (VLLILLALLFLLLTLCCLLYF). The Cytoplasmic segment spans residues 3439–3767 (CTKCHCFKGR…SQTSTHVTKK (329 aa)). Residues 3582–3729 (TTTTDEQGNT…EEDVEHSVGD (148 aa)) are disordered. Over residues 3588-3597 (QGNTIVTTTE) the composition is skewed to polar residues. A compositionally biased stretch (low complexity) spans 3630-3665 (QSQSQQQQSMSQGMSQSMSQHATSAGYSSSGMESSA). Residues 3675–3684 (HTGERERGGS) show a composition bias toward basic and acidic residues. Residues 3690–3702 (IGRARGMAAASSG) are compositionally biased toward low complexity.

Expressed in the hypodermis at the sites of muscle contact, in striated muscles including body wall muscles, the anal sphincter muscles and the junctions between the anal sphincter muscle and rectal cuticle. Also expressed in non-muscle cells including the excretory duct cell and pore cells.

The protein resides in the cell membrane. Its subcellular location is the cell junction. It is found in the hemidesmosome. Functionally, involved in cell adhesion and required for organ positioning and attachment. At the hypodermal surface, required for attachment of the hypdermermis to the basal cuticle in postembryonic development, possibly through intermediate filaments of the cytoskeleton. The chain is Transmembrane cell adhesion receptor mua-3 from Caenorhabditis elegans.